The chain runs to 115 residues: NADH-ubiquinone oxidoreductase chain 3 (115 aa).

3 consecutive transmembrane segments (helical) span residues 4–24 (ALTLFTNTALASLLVLIAFWL), 55–75 (FFLVAITFLLFDLEIALLLPL), and 84–104 (LTTMLTMALLLISLLAASLAY).

The protein belongs to the complex I subunit 3 family. As to quaternary structure, core subunit of respiratory chain NADH dehydrogenase (Complex I) which is composed of 45 different subunits. Interacts with TMEM186. Interacts with TMEM242.

It localises to the mitochondrion inner membrane. The enzyme catalyses a ubiquinone + NADH + 5 H(+)(in) = a ubiquinol + NAD(+) + 4 H(+)(out). Functionally, core subunit of the mitochondrial membrane respiratory chain NADH dehydrogenase (Complex I) which catalyzes electron transfer from NADH through the respiratory chain, using ubiquinone as an electron acceptor. Essential for the catalytic activity of complex I. The chain is NADH-ubiquinone oxidoreductase chain 3 from Halichoerus grypus (Gray seal).